The sequence spans 1322 residues: Putative DNA ligase 4 (1322 aa).

ATP contacts are provided by E265, K267, R272, R287, E317, F387, E497, K502, R513, K519, and K521. The N6-AMP-lysine intermediate role is filled by K267. E317 contributes to the Mg(2+) binding site. Residue E497 coordinates Mg(2+). BRCT domains lie at 686 to 768 (LDVQ…PKFD) and 825 to 935 (ERFC…TYSL). Disordered regions lie at residues 945-1212 (IERS…SATC) and 1245-1310 (AEAK…KKVS). A compositionally biased stretch (basic and acidic residues) spans 957–969 (DKLEENEKADTSH). Composition is skewed to basic residues over residues 970–979 (VKHAPRKRGR) and 994–1005 (PVRRTRARRGNQ). Basic and acidic residues-rich tracts occupy residues 1007–1022 (AKID…HGET) and 1033–1047 (NISK…KDQV). Basic residues predominate over residues 1051–1063 (PVRRTRARRGKQH). 3 stretches are compositionally biased toward basic and acidic residues: residues 1082–1104 (DDQR…RDQG), 1125–1161 (AKID…KDQE), and 1190–1204 (PKHE…RDTA). Residues 1261 to 1288 (SSYVAPVPQASASSASSSGVPAPHAGSS) are compositionally biased toward low complexity.

This sequence belongs to the ATP-dependent DNA ligase family. Mg(2+) is required as a cofactor.

It is found in the nucleus. The catalysed reaction is ATP + (deoxyribonucleotide)n-3'-hydroxyl + 5'-phospho-(deoxyribonucleotide)m = (deoxyribonucleotide)n+m + AMP + diphosphate.. DNA ligase involved in DNA non-homologous end joining (NHEJ); required for double-strand break (DSB) repair. This Oryza sativa subsp. japonica (Rice) protein is Putative DNA ligase 4 (LIG4).